A 494-amino-acid polypeptide reads, in one-letter code: Integrin beta-like protein 1 (494 aa).

The first 23 residues, 1-23 (MHPPGFKNFLLLVSSLFFIGLSA), serve as a signal peptide directing secretion. Cystine bridges form between Cys40–Cys71, Cys51–Cys69, Cys63–Cys74, Cys76–Cys89, Cys91–Cys112, Cys96–Cys110, Cys104–Cys115, Cys117–Cys126, Cys132–Cys159, Cys143–Cys157, Cys151–Cys162, Cys164–Cys178, Cys180–Cys202, Cys185–Cys200, Cys194–Cys205, Cys207–Cys216, Cys220–Cys247, Cys231–Cys245, Cys239–Cys250, Cys252–Cys269, Cys271–Cys296, Cys276–Cys294, Cys288–Cys299, Cys301–Cys310, Cys316–Cys343, Cys327–Cys341, Cys335–Cys346, Cys348–Cys361, Cys363–Cys384, Cys368–Cys382, Cys376–Cys387, Cys389–Cys398, Cys404–Cys431, Cys415–Cys429, Cys423–Cys434, Cys436–Cys448, Cys450–Cys471, Cys455–Cys469, Cys463–Cys474, and Cys476–Cys485. I-EGF domains follow at residues 40–90 (CRLS…PLCE), 91–127 (CHDW…EACQ), 132–179 (CDLT…KFCE), 180–217 (CDDR…DKCE), 220–270 (CDIT…DTCE), 271–311 (CDER…KKCE), 316–362 (CPLS…KTCE), 363–399 (CDDR…KLCQ), 404–449 (CNMT…EFCD), and 450–486 (CDDR…NACE). One copy of the I repeat lies at 51 to 95 (CRAPGQPPGSALCHDRGRCECGVCICHVTEPGTYFGPLCECHDWV). The cysteine-rich tandem repeats stretch occupies residues 51 to 494 (CRAPGQPPGS…CEIWLGTEYP (444 aa)). The II repeat unit spans residues 96-142 (CETYDGKTCAGHGTCDCGKCKCDVGWSGEACQYPTKCDLTKKISNQM). Residues 143–184 (CKNSQDVICSNAGTCHCGRCKCDNSDGHGLIYGKFCECDDRE) form an III repeat. One copy of the IV repeat lies at 185-230 (CIDDETEEICGGHGKCYCGNCYCEAGWHGDKCEFQCDITPWESKRR). One copy of the V repeat lies at 231–275 (CTSPDGKVCSNRGTCVCGECSCHDVDPTGDWGDIHGDTCECDERD). Residues 276–326 (CRAVYDRYSDDFCSGHGQCNCGRCDCRAGWYGKKCEHPKNCPLSAEESTRK) form a VI repeat. A VII repeat occupies 327 to 367 (CQGSSDLPCSGRGRCECGRCTCYPPGDSRVYGKTCECDDRR). One copy of the VIII repeat lies at 368–414 (CEDLDGVVCGGRGTCSCGRCVCEKGWFGKLCQHPRKCNMTEEQSRSL). Asn405 carries N-linked (GlcNAc...) asparagine glycosylation. Residues 415-454 (CESADGTLCSGKGSCHCGKCICSGEEWYISGEFCDCDDRD) form an IX repeat. The X repeat unit spans residues 455 to 494 (CDKHDGLICTGNGICSCGNCECWDGWNGNACEIWLGTEYP).

Its subcellular location is the secreted. This is Integrin beta-like protein 1 (Itgbl1) from Rattus norvegicus (Rat).